A 436-amino-acid polypeptide reads, in one-letter code: Trigger factor (436 aa).

The PPIase FKBP-type domain occupies 163–248; that stretch reads GDQVIIDFVG…VHSVQTKVLP (86 aa).

It belongs to the FKBP-type PPIase family. Tig subfamily.

It localises to the cytoplasm. It carries out the reaction [protein]-peptidylproline (omega=180) = [protein]-peptidylproline (omega=0). Involved in protein export. Acts as a chaperone by maintaining the newly synthesized protein in an open conformation. Functions as a peptidyl-prolyl cis-trans isomerase. This Hydrogenovibrio crunogenus (strain DSM 25203 / XCL-2) (Thiomicrospira crunogena) protein is Trigger factor.